The primary structure comprises 362 residues: UDP-N-acetylglucosamine--N-acetylmuramyl-(pentapeptide) pyrophosphoryl-undecaprenol N-acetylglucosamine transferase (362 aa).

Residues 15-17, N127, R165, S191, I247, 266-271, and Q292 each bind UDP-N-acetyl-alpha-D-glucosamine; these read TGG and ALTVSE.

It belongs to the glycosyltransferase 28 family. MurG subfamily.

The protein resides in the cell inner membrane. The catalysed reaction is di-trans,octa-cis-undecaprenyl diphospho-N-acetyl-alpha-D-muramoyl-L-alanyl-D-glutamyl-meso-2,6-diaminopimeloyl-D-alanyl-D-alanine + UDP-N-acetyl-alpha-D-glucosamine = di-trans,octa-cis-undecaprenyl diphospho-[N-acetyl-alpha-D-glucosaminyl-(1-&gt;4)]-N-acetyl-alpha-D-muramoyl-L-alanyl-D-glutamyl-meso-2,6-diaminopimeloyl-D-alanyl-D-alanine + UDP + H(+). The protein operates within cell wall biogenesis; peptidoglycan biosynthesis. Functionally, cell wall formation. Catalyzes the transfer of a GlcNAc subunit on undecaprenyl-pyrophosphoryl-MurNAc-pentapeptide (lipid intermediate I) to form undecaprenyl-pyrophosphoryl-MurNAc-(pentapeptide)GlcNAc (lipid intermediate II). This is UDP-N-acetylglucosamine--N-acetylmuramyl-(pentapeptide) pyrophosphoryl-undecaprenol N-acetylglucosamine transferase from Shewanella baltica (strain OS223).